The chain runs to 636 residues: Chaperone protein HtpG (636 aa).

The tract at residues 1 to 345 (MSESATANAN…SSDLPLNVSR (345 aa)) is a; substrate-binding. The segment at 346 to 562 (EILQQSKDID…EHDPSGNLAR (217 aa)) is b. The segment at 563 to 636 (LMKAAGQPMP…NDLMMALSAK (74 aa)) is c.

The protein belongs to the heat shock protein 90 family. As to quaternary structure, homodimer.

The protein localises to the cytoplasm. Molecular chaperone. Has ATPase activity. This chain is Chaperone protein HtpG, found in Dechloromonas aromatica (strain RCB).